A 264-amino-acid chain; its full sequence is Ribosomal protein L11 methyltransferase (264 aa).

Residues T116, G137, D159, and N200 each contribute to the S-adenosyl-L-methionine site.

Belongs to the methyltransferase superfamily. PrmA family.

The protein localises to the cytoplasm. The enzyme catalyses L-lysyl-[protein] + 3 S-adenosyl-L-methionine = N(6),N(6),N(6)-trimethyl-L-lysyl-[protein] + 3 S-adenosyl-L-homocysteine + 3 H(+). Its function is as follows. Methylates ribosomal protein L11. This chain is Ribosomal protein L11 methyltransferase, found in Thermotoga petrophila (strain ATCC BAA-488 / DSM 13995 / JCM 10881 / RKU-1).